We begin with the raw amino-acid sequence, 428 residues long: 3-phosphoshikimate 1-carboxyvinyltransferase (428 aa).

Lys-22, Ser-23, and Arg-27 together coordinate 3-phosphoshikimate. Residue Lys-22 participates in phosphoenolpyruvate binding. Phosphoenolpyruvate is bound by residues Gly-96 and Arg-124. Residues Ser-170, Ser-171, Gln-172, Ser-198, Asp-314, Asn-337, and Lys-341 each contribute to the 3-phosphoshikimate site. Residue Gln-172 coordinates phosphoenolpyruvate. Asp-314 functions as the Proton acceptor in the catalytic mechanism. Residues Arg-345, Arg-387, and Lys-412 each contribute to the phosphoenolpyruvate site.

It belongs to the EPSP synthase family. As to quaternary structure, monomer.

It is found in the cytoplasm. The enzyme catalyses 3-phosphoshikimate + phosphoenolpyruvate = 5-O-(1-carboxyvinyl)-3-phosphoshikimate + phosphate. The protein operates within metabolic intermediate biosynthesis; chorismate biosynthesis; chorismate from D-erythrose 4-phosphate and phosphoenolpyruvate: step 6/7. In terms of biological role, catalyzes the transfer of the enolpyruvyl moiety of phosphoenolpyruvate (PEP) to the 5-hydroxyl of shikimate-3-phosphate (S3P) to produce enolpyruvyl shikimate-3-phosphate and inorganic phosphate. The protein is 3-phosphoshikimate 1-carboxyvinyltransferase of Shewanella denitrificans (strain OS217 / ATCC BAA-1090 / DSM 15013).